The primary structure comprises 236 residues: Orotidine 5'-phosphate decarboxylase (236 aa).

Residues Asp14, Lys36, 63–72 (DLKYHDIPNT), Thr122, Arg183, Gln192, Gly212, and Arg213 each bind substrate. The active-site Proton donor is Lys65.

The protein belongs to the OMP decarboxylase family. Type 1 subfamily. As to quaternary structure, homodimer.

It catalyses the reaction orotidine 5'-phosphate + H(+) = UMP + CO2. It participates in pyrimidine metabolism; UMP biosynthesis via de novo pathway; UMP from orotate: step 2/2. Functionally, catalyzes the decarboxylation of orotidine 5'-monophosphate (OMP) to uridine 5'-monophosphate (UMP). The chain is Orotidine 5'-phosphate decarboxylase from Halorhodospira halophila (strain DSM 244 / SL1) (Ectothiorhodospira halophila (strain DSM 244 / SL1)).